A 363-amino-acid chain; its full sequence is Phospho-N-acetylmuramoyl-pentapeptide-transferase (363 aa).

10 helical membrane passes run 27 to 47 (SGCA…PFIA), 76 to 96 (TMGG…WADL), 97 to 117 (TNGF…VGFA), 137 to 157 (LGCE…LTPP), 171 to 191 (VLLP…TGFG), 202 to 222 (GLAI…SYLV), 242 to 262 (LAVF…FNAP), 265 to 285 (AVFM…AVAV), 292 to 312 (VLCI…IQIF), and 340 to 360 (KIVI…LATL).

It belongs to the glycosyltransferase 4 family. MraY subfamily. It depends on Mg(2+) as a cofactor.

It is found in the cell inner membrane. It carries out the reaction UDP-N-acetyl-alpha-D-muramoyl-L-alanyl-gamma-D-glutamyl-meso-2,6-diaminopimeloyl-D-alanyl-D-alanine + di-trans,octa-cis-undecaprenyl phosphate = di-trans,octa-cis-undecaprenyl diphospho-N-acetyl-alpha-D-muramoyl-L-alanyl-D-glutamyl-meso-2,6-diaminopimeloyl-D-alanyl-D-alanine + UMP. It functions in the pathway cell wall biogenesis; peptidoglycan biosynthesis. Its function is as follows. Catalyzes the initial step of the lipid cycle reactions in the biosynthesis of the cell wall peptidoglycan: transfers peptidoglycan precursor phospho-MurNAc-pentapeptide from UDP-MurNAc-pentapeptide onto the lipid carrier undecaprenyl phosphate, yielding undecaprenyl-pyrophosphoryl-MurNAc-pentapeptide, known as lipid I. The protein is Phospho-N-acetylmuramoyl-pentapeptide-transferase of Gluconobacter oxydans (strain 621H) (Gluconobacter suboxydans).